Here is an 831-residue protein sequence, read N- to C-terminus: Prolactin receptor (831 aa).

The signal sequence occupies residues 1–23 (MKQNLISSVQIILLLPLTTVGLT). Residues 24–438 (SQSFPGKPKI…EIPNDFRVKD (415 aa)) are Extracellular-facing. 4 consecutive Fibronectin type-III domains span residues 30 to 128 (KPKI…VQPG), 129 to 232 (SPVN…SPPE), 233 to 331 (KPTI…VQPD), and 332 to 433 (PPAN…IPND). A disulfide bond links Cys36 and Cys46. N-linked (GlcNAc...) asparagine glycosylation is present at Asn59. The cysteines at positions 75 and 86 are disulfide-linked. Asn91, Asn100, Asn112, Asn132, Asn262, Asn303, Asn315, and Asn335 each carry an N-linked (GlcNAc...) asparagine glycan. The Zn(2+) site is built by Asp414 and His416. The WSXWS motif motif lies at 419-423 (WSEWS). A helical transmembrane segment spans residues 439 to 459 (MIVWIVLGVLSSLICLIMSWT). At 460 to 831 (MVLKGYRMIT…DPSSFMPSFK (372 aa)) the chain is on the cytoplasmic side. A Box 1 motif motif is present at residues 471–479 (ILPPVPGPK). 2 disordered regions span residues 527 to 563 (HQLM…SPSL) and 776 to 831 (HTPT…PSFK). Basic and acidic residues predominate over residues 545-554 (TLKETDRDSG). The span at 777-803 (TPTSQEEPAKETSQNPQQGQVETNMSY) shows a compositional bias: polar residues.

The protein belongs to the type I cytokine receptor family. Type 1 subfamily.

It is found in the membrane. In terms of biological role, this is a receptor for the anterior pituitary hormone prolactin. The chain is Prolactin receptor (PRLR) from Meleagris gallopavo (Wild turkey).